The following is a 363-amino-acid chain: Carbamoyl phosphate synthase small chain (363 aa).

Residues 1 to 172 (MKAFLVLDNG…TKYIFGTHTG (172 aa)) are CPSase. S45, G224, and G226 together coordinate L-glutamine. Residues 176 to 362 (KLAVYDYGVK…YDLVETTKRG (187 aa)) form the Glutamine amidotransferase type-1 domain. C252 (nucleophile) is an active-site residue. L-glutamine is bound by residues L253, Q256, N294, G296, and F297. Residues H335 and E337 contribute to the active site.

This sequence belongs to the CarA family. In terms of assembly, composed of two chains; the small (or glutamine) chain promotes the hydrolysis of glutamine to ammonia, which is used by the large (or ammonia) chain to synthesize carbamoyl phosphate. Tetramer of heterodimers (alpha,beta)4.

The catalysed reaction is hydrogencarbonate + L-glutamine + 2 ATP + H2O = carbamoyl phosphate + L-glutamate + 2 ADP + phosphate + 2 H(+). It catalyses the reaction L-glutamine + H2O = L-glutamate + NH4(+). It functions in the pathway amino-acid biosynthesis; L-arginine biosynthesis; carbamoyl phosphate from bicarbonate: step 1/1. It participates in pyrimidine metabolism; UMP biosynthesis via de novo pathway; (S)-dihydroorotate from bicarbonate: step 1/3. Small subunit of the glutamine-dependent carbamoyl phosphate synthetase (CPSase). CPSase catalyzes the formation of carbamoyl phosphate from the ammonia moiety of glutamine, carbonate, and phosphate donated by ATP, constituting the first step of 2 biosynthetic pathways, one leading to arginine and/or urea and the other to pyrimidine nucleotides. The small subunit (glutamine amidotransferase) binds and cleaves glutamine to supply the large subunit with the substrate ammonia. This Leptospira borgpetersenii serovar Hardjo-bovis (strain L550) protein is Carbamoyl phosphate synthase small chain.